Reading from the N-terminus, the 96-residue chain is Co-chaperonin GroES (96 aa).

It belongs to the GroES chaperonin family. In terms of assembly, heptamer of 7 subunits arranged in a ring. Interacts with the chaperonin GroEL.

Its subcellular location is the cytoplasm. Its function is as follows. Together with the chaperonin GroEL, plays an essential role in assisting protein folding. The GroEL-GroES system forms a nano-cage that allows encapsulation of the non-native substrate proteins and provides a physical environment optimized to promote and accelerate protein folding. GroES binds to the apical surface of the GroEL ring, thereby capping the opening of the GroEL channel. The sequence is that of Co-chaperonin GroES from Actinobacillus pleuropneumoniae serotype 3 (strain JL03).